The primary structure comprises 1699 residues: Hybrid signal transduction histidine kinase E (1699 aa).

Disordered regions lie at residues 1 to 32 (MDKLKINNNLSPPSSPSSSTTTPNLSSTNLEN) and 58 to 97 (NNIIINNNNNNNNNNNNNNNNNNNNSNNNNNNINNNNPNV). The segment covering 7–32 (NNNLSPPSSPSSSTTTPNLSSTNLEN) has biased composition (low complexity). 6 helical membrane passes run 142–162 (CILLGECGVYVFIYMFFLIFL), 164–184 (SFYPIFICGIVSMIVLYIVST), 191–211 (LVALIYIFVQSILNFTFFLQI), 238–258 (LNFLFIMNLILSLISIQIFFP), 262–282 (FSITLTCSLNIFNIIIHLISI), and 295–315 (NLIVPITVSFLLSFYSYILSI). The segment covering 412-432 (ITNGGNNKQTSTTSANSTPRY) has biased composition (polar residues). Disordered stretches follow at residues 412–439 (ITNGGNNKQTSTTSANSTPRYNNYNNNN) and 542–593 (LLNN…NISN). A compositionally biased stretch (low complexity) spans 544-593 (NNNNNNNNNNNNNNNNNNNNNNNNNNSNNNNNNNSNNNNNNNNINNNISN). Residues 678 to 950 (TVSHEVRTPI…AFSFTSILST (273 aa)) form the Histidine kinase domain. Histidine 681 carries the phosphohistidine; by autocatalysis modification. Disordered regions lie at residues 819–866 (NNNN…NNNN), 1018–1054 (NNNNNNNNNNNNNNNNNNNNNNNNDNNNNNNNNNDNN), 1186–1239 (KKQQ…RKSS), 1252–1294 (MVQV…NPNN), and 1351–1406 (SIPI…SPPP). A compositionally biased stretch (polar residues) spans 1198–1212 (MGDTLSSTKSPQYTN). The span at 1219–1239 (SSSSNGSLNKSNRSNLLRKSS) shows a compositional bias: low complexity. Positions 1271–1282 (KGNNSNPNSTEL) are enriched in polar residues. Low complexity-rich tracts occupy residues 1283 to 1294 (NSTNSVNGNPNN) and 1355 to 1392 (NINNNDNNNNNNNNNNNNNNNNNNNNNNNNNNNNNNNN). Residues 1575–1695 (NALIVDDTEL…TLKDTLLKWG (121 aa)) form the Response regulatory domain. A 4-aspartylphosphate modification is found at aspartate 1625.

It localises to the membrane. The catalysed reaction is ATP + protein L-histidine = ADP + protein N-phospho-L-histidine.. May act in a signal transduction pathway. This protein undergoes an ATP-dependent autophosphorylation at a conserved histidine residue in the kinase core, and a phosphoryl group is then transferred to a conserved aspartate residue in the receiver domain. In Dictyostelium discoideum (Social amoeba), this protein is Hybrid signal transduction histidine kinase E (dhkE).